A 215-amino-acid chain; its full sequence is Pyrrolidone-carboxylate peptidase (215 aa).

Active-site residues include E80, C143, and H167.

It belongs to the peptidase C15 family. In terms of assembly, homotetramer.

It localises to the cytoplasm. It carries out the reaction Release of an N-terminal pyroglutamyl group from a polypeptide, the second amino acid generally not being Pro.. Removes 5-oxoproline from various penultimate amino acid residues except L-proline. The chain is Pyrrolidone-carboxylate peptidase from Bacillus cereus (strain Q1).